An 858-amino-acid polypeptide reads, in one-letter code: G2-specific protein kinase nim-1 (858 aa).

The 284-residue stretch at 7 to 290 (YELLEKIGHG…TATLLNLPIV (284 aa)) folds into the Protein kinase domain. Residues 13-21 (IGHGSFGII) and K36 contribute to the ATP site. D161 acts as the Proton acceptor in catalysis. Phosphothreonine; by autocatalysis is present on T194. A coiled-coil region spans residues 291 to 383 (RLMRKEKEVV…QARVEAELQR (93 aa)). Disordered regions lie at residues 495–693 (TKAP…LPQA) and 747–858 (SAVD…LSQS). Residues 516-525 (SNWEVPRETE) show a composition bias toward basic and acidic residues. A compositionally biased stretch (acidic residues) spans 526 to 535 (MIDSGDESEA). 2 stretches are compositionally biased toward polar residues: residues 548–572 (SSKNPFSTVTTRSRPSLNSQQNSNV) and 580–598 (SKQTLATRSKTVSGVSSIG). The span at 636–648 (SANNINNSSNGGS) shows a compositional bias: low complexity. The segment covering 650-661 (APSSTVTSNITV) has biased composition (polar residues). The segment covering 676 to 691 (SSFSQQQNNQPQQSLP) has biased composition (low complexity). The segment covering 760–780 (GQSQLPTRPRSQPQPITANFE) has biased composition (polar residues). Positions 781–802 (QQQQQQQSNTNSISSSNSAGSG) are enriched in low complexity.

Belongs to the protein kinase superfamily. CAMK Ser/Thr protein kinase family.

The protein resides in the nucleus. It catalyses the reaction L-seryl-[protein] + ATP = O-phospho-L-seryl-[protein] + ADP + H(+). It carries out the reaction L-threonyl-[protein] + ATP = O-phospho-L-threonyl-[protein] + ADP + H(+). Protein kinase that plays an important role in mitotic regulation. The polypeptide is G2-specific protein kinase nim-1 (nim-1) (Neurospora crassa (strain ATCC 24698 / 74-OR23-1A / CBS 708.71 / DSM 1257 / FGSC 987)).